Reading from the N-terminus, the 244-residue chain is Phosphoadenosine 5'-phosphosulfate reductase (244 aa).

The active-site Nucleophile; cysteine thiosulfonate intermediate is Cys239.

This sequence belongs to the PAPS reductase family. CysH subfamily.

It is found in the cytoplasm. The enzyme catalyses [thioredoxin]-disulfide + sulfite + adenosine 3',5'-bisphosphate + 2 H(+) = [thioredoxin]-dithiol + 3'-phosphoadenylyl sulfate. It functions in the pathway sulfur metabolism; hydrogen sulfide biosynthesis; sulfite from sulfate: step 3/3. Functionally, catalyzes the formation of sulfite from phosphoadenosine 5'-phosphosulfate (PAPS) using thioredoxin as an electron donor. The protein is Phosphoadenosine 5'-phosphosulfate reductase of Pectobacterium atrosepticum (strain SCRI 1043 / ATCC BAA-672) (Erwinia carotovora subsp. atroseptica).